A 300-amino-acid polypeptide reads, in one-letter code: Free fatty acid receptor 1 (300 aa).

The Extracellular portion of the chain corresponds to 1-8 (MDLPPQLS). Residues 9 to 31 (FALYVAAFALGFPLNVLAIRGAR) traverse the membrane as a helical segment. The Cytoplasmic portion of the chain corresponds to 32 to 41 (AHARRRLTPS). Residues 42–64 (LVYALNLGCSDLLLTVSLPLKAV) traverse the membrane as a helical segment. Topologically, residues 65–79 (EALASGAWPLPASLC) are extracellular. A disulfide bridge links Cys79 with Cys170. The helical transmembrane segment at 80–101 (PVFGVAHFAPLYAGGGFLAALS) threads the bilayer. Topologically, residues 102–121 (AGRYLGAAFPLGYQAFRRPC) are cytoplasmic. Residues 122-142 (YSWGVCAAIWALVLCHLGLVF) form a helical membrane-spanning segment. Residues 143–178 (VLEAPGGWLDHSNTSLGINTPVNGSPVCLEAWDPAS) lie on the Extracellular side of the membrane. Asn155 carries N-linked (GlcNAc...) asparagine glycosylation. A helical membrane pass occupies residues 179–200 (AGPARFSLSLLLFFLPLAITAF). The Cytoplasmic segment spans residues 201–223 (CYVGCLRALAHSGLTHRRKLRAA). A helical transmembrane segment spans residues 224 to 248 (WVAGGALLTLLLCVGPYNASNVASF). The Extracellular segment spans residues 249–256 (LNPNLGGS). A helical membrane pass occupies residues 257 to 279 (WRKLGLITGAWSVVLNPLVTGYL). The Cytoplasmic segment spans residues 280-300 (GRGPGLKTVCAARTQGSTSQK).

It belongs to the G-protein coupled receptor 1 family.

It is found in the cell membrane. G-protein coupled receptor for medium and long chain saturated and unsaturated fatty acids that plays an important role in glucose homeostasis. Fatty acid binding increases glucose-stimulated insulin secretion, and may also enhance the secretion of glucagon-like peptide 1 (GLP-1). May also play a role in bone homeostasis; receptor signaling activates pathways that inhibit osteoclast differentiation. Ligand binding leads to a conformation change that triggers signaling via G-proteins that activate phospholipase C, leading to an increase of the intracellular calcium concentration. Seems to act through a G(q) and G(i)-mediated pathway. Mediates the anti-inflammatory effects of omega-3 polyunsaturated fatty acids (PUFAs) via inhibition of NLRP3 inflammasome activation. In Macaca fascicularis (Crab-eating macaque), this protein is Free fatty acid receptor 1 (FFAR1).